The following is a 360-amino-acid chain: MTATLERRESASLWERFCSWITSTDNRLYIGWFGVLMIPTLLTATTVYIIAFIAAPPVDIDGIREPVAGSLLYGNNIITGAVIPSSASIGIHFYPIWEAASLDEWLYNGGPYQLIVDHFLLGVCGWIGREWEFSYRLGMRPWISVAFTAPVAAASAVFLVYPIGQGSFSDGMPLGISGTFNFMLVFQAEHNILMHPFHQLGVAGVFGGSLFSAMHGSLVTSSLIRETTENESANYGYKFGQEEETYNIVAAHGYFGRLIFQYASFNNSRALHFFLGLWPVVGIWFTALGIMTMAFNLNGFNFNQSVVDSQGRVINTWADILNRANLGMEVMHERNAHNFPLDLAAGESLPVALTAPAVNG.

3 helical membrane passes run 29–46, 118–133, and 142–156; these read YIGW…TATT, HFLL…EWEF, and WISV…AASA. Histidine 118 is a binding site for chlorophyll a. Tryptophan 126 lines the pheophytin a pocket. [CaMn4O5] cluster is bound by residues aspartate 170 and glutamate 189. The helical transmembrane segment at 197–218 threads the bilayer; that stretch reads FHQLGVAGVFGGSLFSAMHGSL. Histidine 198 contacts chlorophyll a. Residues histidine 215 and 264-265 contribute to the a quinone site; that span reads SF. A Fe cation-binding site is contributed by histidine 215. Histidine 272 lines the Fe cation pocket. The helical transmembrane segment at 274-288 threads the bilayer; the sequence is FLGLWPVVGIWFTAL. Histidine 332, glutamate 333, aspartate 342, and alanine 344 together coordinate [CaMn4O5] cluster. Positions 345–360 are excised as a propeptide; the sequence is AGESLPVALTAPAVNG.

The protein belongs to the reaction center PufL/M/PsbA/D family. In terms of assembly, PSII is composed of 1 copy each of membrane proteins PsbA, PsbB, PsbC, PsbD, PsbE, PsbF, PsbH, PsbI, PsbJ, PsbK, PsbL, PsbM, PsbT, PsbX, PsbY, PsbZ, Psb30/Ycf12, at least 3 peripheral proteins of the oxygen-evolving complex and a large number of cofactors. It forms dimeric complexes. The D1/D2 heterodimer binds P680, chlorophylls that are the primary electron donor of PSII, and subsequent electron acceptors. It shares a non-heme iron and each subunit binds pheophytin, quinone, additional chlorophylls, carotenoids and lipids. D1 provides most of the ligands for the Mn4-Ca-O5 cluster of the oxygen-evolving complex (OEC). There is also a Cl(-1) ion associated with D1 and D2, which is required for oxygen evolution. The PSII complex binds additional chlorophylls, carotenoids and specific lipids. serves as cofactor. Tyr-161 forms a radical intermediate that is referred to as redox-active TyrZ, YZ or Y-Z. In terms of processing, C-terminally processed by CTPA; processing is essential to allow assembly of the oxygen-evolving complex and thus photosynthetic growth.

The protein localises to the plastid. It is found in the chloroplast thylakoid membrane. The catalysed reaction is 2 a plastoquinone + 4 hnu + 2 H2O = 2 a plastoquinol + O2. Photosystem II (PSII) is a light-driven water:plastoquinone oxidoreductase that uses light energy to abstract electrons from H(2)O, generating O(2) and a proton gradient subsequently used for ATP formation. It consists of a core antenna complex that captures photons, and an electron transfer chain that converts photonic excitation into a charge separation. The D1/D2 (PsbA/PsbD) reaction center heterodimer binds P680, the primary electron donor of PSII as well as several subsequent electron acceptors. In Rhodomonas salina (Cryptomonas salina), this protein is Photosystem II protein D1.